We begin with the raw amino-acid sequence, 63 residues long: Large ribosomal subunit protein bL28 (63 aa).

It belongs to the bacterial ribosomal protein bL28 family.

The protein is Large ribosomal subunit protein bL28 of Citrifermentans bemidjiense (strain ATCC BAA-1014 / DSM 16622 / JCM 12645 / Bem) (Geobacter bemidjiensis).